The chain runs to 1690 residues: Restin homolog (1690 aa).

Composition is skewed to polar residues over residues 1 to 11 (MSDDTSASGGT) and 39 to 51 (NIPT…TGIP). The segment at 1–105 (MSDDTSASGG…ESDDNLSSIN (105 aa)) is disordered. A phosphoserine mark is found at serine 64 and serine 67. The CAP-Gly 1 domain maps to 143-185 (GDTHFAAGEWAGVVLDEPNGKNDGCVSGKRYFQCEPKRGIFSR). The interval 195 to 227 (AGAQTPTSPLAKSSPDRSRTVSPTASIRSSMLR) is disordered. Positions 214–226 (TVSPTASIRSSML) are enriched in polar residues. Serine 216 is modified (phosphoserine). One can recognise a CAP-Gly 2 domain in the interval 260–302 (GETQFAPGNWCGVELDEPSGKNDGTVDDIRYFECKPKYGVFVP). Phosphoserine is present on residues serine 309, serine 322, and serine 325. Threonine 327 carries the post-translational modification Phosphothreonine. Residue serine 328 is modified to Phosphoserine. Threonine 362 bears the Phosphothreonine mark. 7 coiled-coil regions span residues 378-468 (QHVE…VSAT), 484-660 (GALQ…DMLR), 667-916 (EEKS…TKLK), 926-981 (LSSC…ELQA), 1001-1121 (ATGH…EAIQ), 1158-1549 (EADM…AQMN), and 1565-1600 (DIET…LETL). The interval 843-905 (QQAAASGEEG…GSLEEEAKKS (63 aa)) is disordered. Residues 865-885 (QLKSQAEETQSELKSTQSNLE) are compositionally biased toward polar residues. 2 disordered regions span residues 1031–1052 (QLQD…KEKS) and 1400–1419 (KLDE…NEIQ). 2 stretches are compositionally biased toward basic and acidic residues: residues 1040–1052 (TKLK…KEKS) and 1410–1419 (SQKKSHNEIQ). Residues 1635 to 1665 (TEDCPIQGSEDQDYSTPSSESNNNEKERKLP) form a disordered region. Position 1681 is a phosphothreonine (threonine 1681). The residue at position 1682 (serine 1682) is a Phosphoserine.

As to quaternary structure, interacts with Lva. In terms of tissue distribution, specifically expressed at the tip of the furrow in cellularizing blastoderms. CLIP-190 and jar are coexpressed at several times in development and in a number of tissues, including embryonic axonal neuron processes and posterior pole.

It localises to the cytoplasm. Its subcellular location is the cytoskeleton. The protein localises to the golgi apparatus. It is found in the microtubule organizing center. The protein resides in the perinuclear region. Together CLIP-190 and jar may coordinate the interaction between the actin and microtubule cytoskeleton. May link endocytic vesicles to microtubules. May play a role in formation of furrows during cellularization. In Drosophila melanogaster (Fruit fly), this protein is Restin homolog (CLIP-190).